The following is a 956-amino-acid chain: DNA replication helicase (956 aa).

120 to 127 (GTAGAGKT) lines the ATP pocket. The interval 658–694 (PINNHVDADSSQGGQSVPVSQRMEHGQEETHDIPCLS) is disordered. A compositionally biased stretch (low complexity) spans 667-678 (SSQGGQSVPVSQ). Over residues 679–694 (RMEHGQEETHDIPCLS) the composition is skewed to basic and acidic residues.

It belongs to the herpesviridae helicase family. As to quaternary structure, associates with the primase and the primase-associated factor to form the helicase-primase complex.

The protein resides in the host nucleus. In terms of biological role, component of the helicase/primase complex. Unwinds the DNA at the replication forks and generates single-stranded DNA for both leading and lagging strand synthesis. The primase synthesizes short RNA primers on the lagging strand that the polymerase elongates using dNTPs. Possesses helicase-like motifs and therefore may act as the helicase subunit of the complex. The chain is DNA replication helicase from Human cytomegalovirus (strain AD169) (HHV-5).